Here is a 418-residue protein sequence, read N- to C-terminus: Secreted aspartic protease 6 (418 aa).

The N-terminal stretch at Met1–Ala18 is a signal peptide. The propeptide at Ala19 to Arg76 is activation peptide. The Peptidase A1 domain maps to Tyr90–Ala404. Residue Asp108 is part of the active site. Residue Asp108–Gly110 coordinates pepstatin A. Cys123 and Cys135 are disulfide-bonded. N-linked (GlcNAc...) asparagine glycosylation is present at Asn138. Asp268 contacts Zn(2+). Asp294 is an active-site residue. Asp294–Thr298 is a binding site for pepstatin A. A disulfide bond links Cys332 and Cys370.

This sequence belongs to the peptidase A1 family.

It is found in the secreted. It carries out the reaction Preferential cleavage at the carboxyl of hydrophobic amino acids, but fails to cleave 15-Leu-|-Tyr-16, 16-Tyr-|-Leu-17 and 24-Phe-|-Phe-25 of insulin B chain. Activates trypsinogen, and degrades keratin.. Inhibited by pepstatin A analogs. In terms of biological role, secreted aspartic peptidases (SAPs) are a group of ten acidic hydrolases considered as key virulence factors. These enzymes supply the fungus with nutrient amino acids as well as are able to degrade the selected host's proteins involved in the immune defense. Moreover, acts toward human hemoglobin though limited proteolysis to generate a variety of antimicrobial hemocidins, enabling to compete with the other microorganisms of the same physiological niche using the microbicidal peptides generated from the host protein. In Candida albicans (Yeast), this protein is Secreted aspartic protease 6.